Here is a 311-residue protein sequence, read N- to C-terminus: Pyrimidine-specific ribonucleoside hydrolase RihA (311 aa).

Residue histidine 240 is part of the active site.

The protein belongs to the IUNH family. RihA subfamily.

Its function is as follows. Hydrolyzes cytidine or uridine to ribose and cytosine or uracil, respectively. This is Pyrimidine-specific ribonucleoside hydrolase RihA from Salmonella enteritidis PT4 (strain P125109).